A 571-amino-acid chain; its full sequence is Glutamate--tRNA ligase (571 aa).

Residues Gly-75–Leu-88 are compositionally biased toward basic and acidic residues. The tract at residues Gly-75–Asn-98 is disordered. The 'HIGH' region motif lies at Pro-105–His-115.

This sequence belongs to the class-I aminoacyl-tRNA synthetase family. Glutamate--tRNA ligase type 2 subfamily.

It localises to the cytoplasm. It carries out the reaction tRNA(Glu) + L-glutamate + ATP = L-glutamyl-tRNA(Glu) + AMP + diphosphate. Functionally, catalyzes the attachment of glutamate to tRNA(Glu) in a two-step reaction: glutamate is first activated by ATP to form Glu-AMP and then transferred to the acceptor end of tRNA(Glu). The polypeptide is Glutamate--tRNA ligase (Methanopyrus kandleri (strain AV19 / DSM 6324 / JCM 9639 / NBRC 100938)).